A 358-amino-acid chain; its full sequence is 3-dehydroquinate synthase (358 aa).

NAD(+) is bound by residues 104-108 (GVIGD), 128-129 (TT), K140, K149, and 167-170 (FLNT). The Zn(2+) site is built by E182, H246, and H260.

It belongs to the sugar phosphate cyclases superfamily. Dehydroquinate synthase family. Requires Co(2+) as cofactor. The cofactor is Zn(2+). NAD(+) is required as a cofactor.

It is found in the cytoplasm. The enzyme catalyses 7-phospho-2-dehydro-3-deoxy-D-arabino-heptonate = 3-dehydroquinate + phosphate. It participates in metabolic intermediate biosynthesis; chorismate biosynthesis; chorismate from D-erythrose 4-phosphate and phosphoenolpyruvate: step 2/7. Functionally, catalyzes the conversion of 3-deoxy-D-arabino-heptulosonate 7-phosphate (DAHP) to dehydroquinate (DHQ). This Staphylococcus carnosus (strain TM300) protein is 3-dehydroquinate synthase.